The chain runs to 1513 residues: Mucin-2 (1513 aa).

Positions 1–20 (MGLPLARLVAVCLVLALAKG) are cleaved as a signal peptide. In terms of domain architecture, VWFD 1 spans 32–204 (HVCSTWGDFH…KINKPEVVCE (173 aa)). Disulfide bonds link Cys-34–Cys-166, Cys-56–Cys-203, Cys-64–Cys-163, Cys-215–Cys-252, Cys-222–Cys-247, Cys-234–Cys-272, Cys-254–Cys-260, Cys-262–Cys-288, Cys-292–Cys-326, Cys-309–Cys-348, Cys-328–Cys-342, Cys-350–Cys-372, Cys-367–Cys-384, Cys-370–Cys-379, Cys-388–Cys-525, Cys-410–Cys-560, Cys-432–Cys-440, Cys-571–Cys-616, Cys-585–Cys-611, Cys-598–Cys-636, Cys-618–Cys-624, Cys-626–Cys-651, Cys-658–Cys-695, Cys-671–Cys-685, Cys-675–Cys-715, Cys-697–Cys-709, Cys-717–Cys-739, and Cys-737–Cys-746. Asp-46 serves as a coordination point for Ca(2+). Cu(+)-binding residues include Met-143 and Met-151. Cu(2+) is bound at residue Glu-153. Asn-160 is a glycosylation site (N-linked (GlcNAc...) asparagine). 3 residues coordinate Ca(2+): Asp-168, Asn-170, and Glu-177. Cu(2+) contacts are provided by His-274 and His-321. A TIL domain is found at 292-348 (CPGNMVYLESGSPWLDTCSHLEVSSLCEEHYMDGCFCPEGTVYDDITGSGCIPVSQC). Met-323 serves as a coordination point for Cu(+). The region spanning 350 to 410 (CKLHGHLYMP…GKKFTFHGDC (61 aa)) is the VWFC domain. The 176-residue stretch at 386–561 (ETCALEGGSH…NTWKAQSSCH (176 aa)) folds into the VWFD 2 domain. Asp-400 is a binding site for Ca(2+). Asn-420 carries an N-linked (GlcNAc...) asparagine glycan. Residues Asn-527, Asn-529, Leu-531, Asp-534, and Asp-535 each contribute to the Ca(2+) site. A glycan (N-linked (GlcNAc...) asparagine) is linked at Asn-667. Asn-767 carries N-linked (GlcNAc...) asparagine glycosylation. Cystine bridges form between Cys-781-Cys-817, Cys-799-Cys-811, Cys-819-Cys-842, Cys-836-Cys-854, Cys-840-Cys-849, Cys-858-Cys-989, Cys-880-Cys-1024, Cys-889-Cys-986, Cys-906-Cys-913, Cys-1034-Cys-1077, Cys-1048-Cys-1072, Cys-1059-Cys-1099, Cys-1079-Cys-1087, Cys-1089-Cys-1114, Cys-1105-Cys-1134, Cys-1118-Cys-1160, Cys-1142-Cys-1184, Cys-1164-Cys-1178, Cys-1186-Cys-1210, Cys-1205-Cys-1235, and Cys-1208-Cys-1218. The N-linked (GlcNAc...) asparagine glycan is linked to Asn-837. A VWFD 3 domain is found at 856-1025 (STCSIYGSGH…NSWKEASTCP (170 aa)). Asp-870 contributes to the Ca(2+) binding site. Asn-892 carries N-linked (GlcNAc...) asparagine glycosylation. Residues Asn-991, Asp-993, Asn-998, and Asp-999 each contribute to the Ca(2+) site. Asn-1136 and Asn-1151 each carry an N-linked (GlcNAc...) asparagine glycan. Residues Asn-1212, Asn-1227, and Asn-1243 are each glycosylated (N-linked (GlcNAc...) asparagine). Residues Thr-1264, Thr-1267, Thr-1268, and Thr-1280 are each glycosylated (O-linked (GalNAc) threonine). Ser-1286 carries an O-linked (GalNAc) serine glycan. O-linked (GalNAc) threonine glycosylation is present at Thr-1290. 6 residues coordinate Ca(2+): Asn-1303, His-1306, Ser-1309, Gly-1313, Asp-1314, and Glu-1316. A glycan (N-linked (GlcNAc...) asparagine) is linked at Asn-1350. The Ca(2+) site is built by Asp-1373 and Tyr-1374. Repeat copies occupy residues 1392 to 1407 (SPTTSTPISSTPQPTS), 1408 to 1423 (SPTTLPTTSPLTSSAT), 1424 to 1434 (SPTTSHITSTV), 1435 to 1445 (SPTTSPTTSTT), 1446 to 1456 (SPTTSPTTSTT), 1457 to 1467 (SPTTSTTSPTP), 1468 to 1478 (SPTTSTTSPTP), 1479 to 1489 (SPTTSTTSPTP), 1490 to 1500 (SPTTSTTSPTT), 1501 to 1511 (SPITSPTTSTT), and 1512 to 1513 (SP). The interval 1392–1513 (SPTTSTPISS…TSPTTSTTSP (122 aa)) is approximate repeats. The tract at residues 1392 to 1513 (SPTTSTPISS…TSPTTSTTSP (122 aa)) is disordered.

As to quaternary structure, homomultimer; disulfide-linked. The N- and C-terminus mediate their assembly into higher order structures to form filaments. The CTCK domains of two polypeptides associate in the endoplasmic reticulum to generate intermolecularly disulfide-bonded dimers. These dimers progress to the Golgi apparatus, which is a more acidic environment than the endoplasmic reticulum. Under acidic conditions, the N-termini form non-covalent intermolecular interactions that juxtapose assemblies of the third VWD domain (VWD3) from different CTCK-linked dimers. The VWD3 assemblies then become disulfide bonded to one another to produce long, disulfide-linked polymers that remain highly compact until secretion. Interacts with FCGBP. Interacts with AGR2; disulfide-linked. In terms of processing, O-glycosylated. O-glycosylation is required for mucin assembly. Goblet cells synthesize two forms of mucin that differ in branched chain O-glycosylation and the site of production in the colon. May undergo proteolytic cleavage in the outer mucus layer of the colon, contributing to the expanded volume and loose nature of this layer which allows for bacterial colonization in contrast to the inner mucus layer which is dense and devoid of bacteria. Post-translationally, at low pH of 6 and under, undergoes autocatalytic cleavage in vitro in the N-terminal region of the fourth VWD domain. It is likely that this also occurs in vivo and is triggered by the low pH of the late secretory pathway. As to expression, expressed in intestine and airway.

The protein localises to the secreted. Coats the epithelia of the intestines and other mucus membrane-containing organs to provide a protective, lubricating barrier against particles and infectious agents at mucosal surfaces. Major constituent of the colon mucus, which is mainly formed by large polymeric networks of MUC2 secreted by goblet cells that cover the exposed surfaces of intestine. MUC2 networks form hydrogels that guard the underlying epithelium from pathogens and other hazardous matter entering from the outside world, while permitting nutrient absorption and gas exchange. Acts as a divalent copper chaperone that protects intestinal cells from copper toxicity and facilitates nutritional copper unptake into cells. Binds both Cu(2+) and its reduced form, Cu(1+), at two juxtaposed binding sites: Cu(2+), once reduced to Cu(1+) by vitamin C (ascorbate) or other dietary antioxidants, transits to the other binding site. MUC2-bound Cu(1+) is protected from oxidation in aerobic environments, and can be released for nutritional delivery to cells. Mucin gels store antimicrobial molecules that participate in innate immunity. Mucin glycoproteins also house and feed the microbiome, lubricate tissue surfaces, and may facilitate the removal of contaminants and waste products from the body. Goblet cells synthesize two forms of MUC2 mucin that differ in branched chain O-glycosylation and the site of production in the colon: a (1) 'thick' mucus that wraps the microbiota to form fecal pellets is produced in the proximal, ascending colon. 'Thick' mucus transits along the descending colon and is lubricated by a (2) 'thin' MUC2 mucus produced in the distal colon which adheres to the 'thick' mucus. The chain is Mucin-2 from Rattus norvegicus (Rat).